The primary structure comprises 92 residues: Small ribosomal subunit protein uS19 (92 aa).

This sequence belongs to the universal ribosomal protein uS19 family.

Functionally, protein S19 forms a complex with S13 that binds strongly to the 16S ribosomal RNA. In Orientia tsutsugamushi (strain Boryong) (Rickettsia tsutsugamushi), this protein is Small ribosomal subunit protein uS19.